Reading from the N-terminus, the 218-residue chain is Octanoyltransferase (218 aa).

In terms of domain architecture, BPL/LPL catalytic spans 32-218; the sequence is GEAAEAIWLL…LRTFPQHFPD (187 aa). Residues 71-78, 151-153, and 164-166 contribute to the substrate site; these read RGGQYTYH, AIG, and GLS. The Acyl-thioester intermediate role is filled by Cys-182.

This sequence belongs to the LipB family.

Its subcellular location is the cytoplasm. The catalysed reaction is octanoyl-[ACP] + L-lysyl-[protein] = N(6)-octanoyl-L-lysyl-[protein] + holo-[ACP] + H(+). Its pathway is protein modification; protein lipoylation via endogenous pathway; protein N(6)-(lipoyl)lysine from octanoyl-[acyl-carrier-protein]: step 1/2. Catalyzes the transfer of endogenously produced octanoic acid from octanoyl-acyl-carrier-protein onto the lipoyl domains of lipoate-dependent enzymes. Lipoyl-ACP can also act as a substrate although octanoyl-ACP is likely to be the physiological substrate. The polypeptide is Octanoyltransferase (Cereibacter sphaeroides (strain ATCC 17029 / ATH 2.4.9) (Rhodobacter sphaeroides)).